A 509-amino-acid polypeptide reads, in one-letter code: Transcription factor SOX-9 (509 aa).

Disordered regions lie at residues 1 to 67 (MNLL…SEED) and 160 to 273 (RLRV…FRDV). A compositionally biased stretch (low complexity) spans 30–41 (SAGSPCPSGSGS). Residues 42–52 (DTENTRPQENT) are compositionally biased toward polar residues. Basic and acidic residues-rich tracts occupy residues 56-67 (GEPDLKKESEED) and 160-174 (RLRVQHKKDHPDYKY). A dimerization (DIM) region spans residues 63 to 103 (ESEEDKFPVCIREAVSQVLKGYDWTLVPMPVRVNGSSKNKP). The PQA stretch occupies residues 63 to 103 (ESEEDKFPVCIREAVSQVLKGYDWTLVPMPVRVNGSSKNKP). Ser64 bears the Phosphoserine mark. Residues 105 to 173 (VKRPMNAFMV…QHKKDHPDYK (69 aa)) constitute a DNA-binding region (HMG box). Ser211 is subject to Phosphoserine. Residues 224–307 (PGEHSGQSQG…LPPNGHPGVP (84 aa)) form a transactivation domain (TAM) region. Short sequence motifs (9aaTAD) lie at residues 275–284 (IGELSSDVIS) and 290–298 (DVNEFDQYL). Positions 330 to 415 (SAGHVWMSKQ…HYSEQQQHSP (86 aa)) are disordered. Over residues 341 to 376 (APPPPPQQPPQAPPAPQAPPQPQAAPPQQPAAPPQQ) the composition is skewed to pro residues. The span at 380-415 (HTLTTLSSEPGQSQRTHIKTEQLSPSHYSEQQQHSP) shows a compositional bias: polar residues. The tract at residues 394 to 509 (RTHIKTEQLS…QPVYTQLTRP (116 aa)) is transactivation domain (TAC). Residue Lys398 forms a Glycyl lysine isopeptide (Lys-Gly) (interchain with G-Cter in ubiquitin) linkage. Positions 460–468 (TGLYSTFTY) match the 9aaTAD 3 motif. The segment at 479–509 (PIADTSGVPSIPQTHSPQHWEQPVYTQLTRP) is disordered. Residues 485–509 (GVPSIPQTHSPQHWEQPVYTQLTRP) show a composition bias toward polar residues.

As to quaternary structure, homodimer; homodimerization is required for activity. Interacts (via C-terminus) with ZNF219; forming a complex that binds to the COL2A1 promoter and activates COL2A1 expression. Interacts with DDRGK1. Interacts with EP300/p300. Interacts with beta-catenin (CTNNB1); inhibiting CTNNB1 activity by competing with the binding sites of TCF/LEF within CTNNB1. Acetylated; acetylation impairs nuclear localization and ability to transactivate expression of target genes. Deacetylated by SIRT1. In terms of processing, phosphorylation at Ser-64 and Ser-211 by PKA increases transcriptional activity and may help delay chondrocyte maturation downstream of PTHLH/PTHrP signaling. Phosphorylation at either Ser-64 or Ser-211 is required for sumoylation, but phosphorylation is not dependent on sumoylation. Phosphorylated on tyrosine residues; tyrosine dephosphorylation by PTPN11/SHP2 blocks SOX9 phosphorylation by PKA and subsequent SUMOylation. Post-translationally, ubiquitinated; ubiquitination leads to proteasomal degradation and is negatively regulated by DDRGK1. Sumoylated; phosphorylation at either Ser-64 or Ser-211 is required for sumoylation. Sumoylation is induced by BMP signaling pathway.

Its subcellular location is the nucleus. Transcription factor that plays a key role in chondrocytes differentiation and skeletal development. Specifically binds the 5'-ACAAAG-3' DNA motif present in enhancers and super-enhancers and promotes expression of genes important for chondrogenesis, including cartilage matrix protein-coding genes COL2A1, COL4A2, COL9A1, COL11A2 and ACAN, SOX5 and SOX6. Also binds to some promoter regions. Plays a central role in successive steps of chondrocyte differentiation. Absolutely required for precartilaginous condensation, the first step in chondrogenesis during which skeletal progenitors differentiate into prechondrocytes. Together with SOX5 and SOX6, required for overt chondrogenesis when condensed prechondrocytes differentiate into early stage chondrocytes, the second step in chondrogenesis. Later, required to direct hypertrophic maturation and block osteoblast differentiation of growth plate chondrocytes: maintains chondrocyte columnar proliferation, delays prehypertrophy and then prevents osteoblastic differentiation of chondrocytes by lowering beta-catenin (CTNNB1) signaling and RUNX2 expression. Also required for chondrocyte hypertrophy, both indirectly, by keeping the lineage fate of chondrocytes, and directly, by remaining present in upper hypertrophic cells and transactivating COL10A1 along with MEF2C. Low lipid levels are the main nutritional determinant for chondrogenic commitment of skeletal progenitor cells: when lipids levels are low, FOXO (FOXO1 and FOXO3) transcription factors promote expression of SOX9, which induces chondrogenic commitment and suppresses fatty acid oxidation. Mechanistically, helps, but is not required, to remove epigenetic signatures of transcriptional repression and deposit active promoter and enhancer marks at chondrocyte-specific genes. Acts in cooperation with the Hedgehog pathway-dependent GLI (GLI1 and GLI3) transcription factors. In addition to cartilage development, also acts as a regulator of proliferation and differentiation in epithelial stem/progenitor cells: involved in the lung epithelium during branching morphogenesis, by balancing proliferation and differentiation and regulating the extracellular matrix. Controls epithelial branching during kidney development. The polypeptide is Transcription factor SOX-9 (Homo sapiens (Human)).